We begin with the raw amino-acid sequence, 198 residues long: NAD(P)H dehydrogenase (quinone) (198 aa).

The 187-residue stretch at 4 to 190 (ILVLYYSMYG…ILASFQGAHV (187 aa)) folds into the Flavodoxin-like domain. FMN-binding positions include 10–15 (SMYGHI) and 79–81 (TRF). Tyrosine 12 is an NAD(+) binding site. Residue tryptophan 99 coordinates substrate. FMN-binding positions include 114 to 119 (STGTGG) and histidine 134.

It belongs to the WrbA family. FMN is required as a cofactor.

The enzyme catalyses a quinone + NADH + H(+) = a quinol + NAD(+). The catalysed reaction is a quinone + NADPH + H(+) = a quinol + NADP(+). The sequence is that of NAD(P)H dehydrogenase (quinone) from Azotobacter vinelandii (strain DJ / ATCC BAA-1303).